Consider the following 1116-residue polypeptide: DNA-directed RNA polymerase subunit beta (1116 aa).

Residues 1070 to 1100 show a composition bias toward basic and acidic residues; it reads KIREEEKEREKEREAREMEDPEKIVSKIDAK. Residues 1070 to 1116 form a disordered region; that stretch reads KIREEEKEREKEREAREMEDPEKIVSKIDAKQKKKYKKTKKQTEKKK. Basic residues predominate over residues 1101-1116; the sequence is QKKKYKKTKKQTEKKK.

The protein belongs to the RNA polymerase beta chain family. In terms of assembly, in plastids the minimal PEP RNA polymerase catalytic core is composed of four subunits: alpha, beta, beta', and beta''. When a (nuclear-encoded) sigma factor is associated with the core the holoenzyme is formed, which can initiate transcription.

It localises to the plastid. It is found in the chloroplast. The catalysed reaction is RNA(n) + a ribonucleoside 5'-triphosphate = RNA(n+1) + diphosphate. In terms of biological role, DNA-dependent RNA polymerase catalyzes the transcription of DNA into RNA using the four ribonucleoside triphosphates as substrates. In Heterosigma akashiwo (Chromophytic alga), this protein is DNA-directed RNA polymerase subunit beta.